The primary structure comprises 597 residues: Gigaxonin (597 aa).

A BTB domain is found at 30–99 (CDAHLVLDGE…IFSGQIRLNE (70 aa)). The region spanning 134 to 236 (CIGIRDFALH…DSSYLREQML (103 aa)) is the BACK domain. 6 Kelch repeats span residues 274 to 326 (CIVT…SAEG), 327 to 374 (FLFV…EIDG), 376 to 421 (LYIL…AMKK), 422 to 468 (KIYA…GVAM), 470 to 522 (LYVF…VYGA), and 528 to 574 (SIYV…AALR).

In terms of assembly, interacts with TBCB. Interacts with CUL3. Part of a complex that contains CUL3, RBX1 and GAN. Interacts (via BTB domain) with UBA1. Interacts (via Kelch domains) with MAP1B (via C-terminus) and MAP1S (via C-terminus). In terms of processing, ubiquitinated by E3 ubiquitin ligase complex formed by CUL3 and RBX1 and probably targeted for proteasome-independent degradation. In terms of tissue distribution, expressed in brain, heart and muscle.

The protein localises to the cytoplasm. The protein resides in the cytoskeleton. It functions in the pathway protein modification; protein ubiquitination. Functionally, probable cytoskeletal component that directly or indirectly plays an important role in neurofilament architecture. May act as a substrate-specific adapter of an E3 ubiquitin-protein ligase complex which mediates the ubiquitination and subsequent proteasomal degradation of target proteins. Controls degradation of TBCB. Controls degradation of MAP1B and MAP1S, and is critical for neuronal maintenance and survival. This Homo sapiens (Human) protein is Gigaxonin (GAN).